Reading from the N-terminus, the 185-residue chain is MVTTEEISLKNELIRLLKDVNCVKFGDFTLASGKQSKYYVDIKKATTNPKVLKAAAKLVNYYVSKENNENLKIAGVELGSVSIATAVSLETEKDLLIIRKKAKEYGTKNKIEGELNPGDNVIVMEDVTTTGGSVSKAVDEIRAVSGNVKKIYVIVDRQEGAKENLAQNNVELIPLVTIEELGLNK.

5-phospho-alpha-D-ribose 1-diphosphate is bound by residues arginine 99, lysine 100, lysine 103, and 125 to 133 (EDVTTTGGS). Residues threonine 129 and arginine 157 each coordinate orotate.

It belongs to the purine/pyrimidine phosphoribosyltransferase family. PyrE subfamily. As to quaternary structure, homodimer. Requires Mg(2+) as cofactor.

The catalysed reaction is orotidine 5'-phosphate + diphosphate = orotate + 5-phospho-alpha-D-ribose 1-diphosphate. The protein operates within pyrimidine metabolism; UMP biosynthesis via de novo pathway; UMP from orotate: step 1/2. Functionally, catalyzes the transfer of a ribosyl phosphate group from 5-phosphoribose 1-diphosphate to orotate, leading to the formation of orotidine monophosphate (OMP). The polypeptide is Orotate phosphoribosyltransferase (Methanococcus maripaludis (strain DSM 14266 / JCM 13030 / NBRC 101832 / S2 / LL)).